The chain runs to 368 residues: Phospho-N-acetylmuramoyl-pentapeptide-transferase (368 aa).

9 helical membrane passes run A30–L50, V72–A92, H98–Y118, V139–L159, F170–S190, G201–G221, A238–F258, P262–L284, and K345–L365.

Belongs to the glycosyltransferase 4 family. MraY subfamily. Mg(2+) is required as a cofactor.

It localises to the cell inner membrane. The catalysed reaction is UDP-N-acetyl-alpha-D-muramoyl-L-alanyl-gamma-D-glutamyl-meso-2,6-diaminopimeloyl-D-alanyl-D-alanine + di-trans,octa-cis-undecaprenyl phosphate = di-trans,octa-cis-undecaprenyl diphospho-N-acetyl-alpha-D-muramoyl-L-alanyl-D-glutamyl-meso-2,6-diaminopimeloyl-D-alanyl-D-alanine + UMP. It functions in the pathway cell wall biogenesis; peptidoglycan biosynthesis. Its function is as follows. Catalyzes the initial step of the lipid cycle reactions in the biosynthesis of the cell wall peptidoglycan: transfers peptidoglycan precursor phospho-MurNAc-pentapeptide from UDP-MurNAc-pentapeptide onto the lipid carrier undecaprenyl phosphate, yielding undecaprenyl-pyrophosphoryl-MurNAc-pentapeptide, known as lipid I. The chain is Phospho-N-acetylmuramoyl-pentapeptide-transferase from Chlorobaculum parvum (strain DSM 263 / NCIMB 8327) (Chlorobium vibrioforme subsp. thiosulfatophilum).